The following is a 295-amino-acid chain: Fructose-bisphosphate aldolase class 1 (295 aa).

The Proton acceptor role is filled by Glu176. Catalysis depends on Lys213, which acts as the Schiff-base intermediate with dihydroxyacetone-P.

It belongs to the class I fructose-bisphosphate aldolase family.

The catalysed reaction is beta-D-fructose 1,6-bisphosphate = D-glyceraldehyde 3-phosphate + dihydroxyacetone phosphate. It participates in carbohydrate degradation; glycolysis; D-glyceraldehyde 3-phosphate and glycerone phosphate from D-glucose: step 4/4. In Treponema denticola (strain ATCC 35405 / DSM 14222 / CIP 103919 / JCM 8153 / KCTC 15104), this protein is Fructose-bisphosphate aldolase class 1.